Reading from the N-terminus, the 237-residue chain is Carbohydrate deacetylase (237 aa).

Mg(2+)-binding residues include His59 and His125.

This sequence belongs to the YdjC deacetylase family. Requires Mg(2+) as cofactor.

Functionally, probably catalyzes the deacetylation of acetylated carbohydrates an important step in the degradation of oligosaccharides. The sequence is that of Carbohydrate deacetylase from Halalkalibacterium halodurans (strain ATCC BAA-125 / DSM 18197 / FERM 7344 / JCM 9153 / C-125) (Bacillus halodurans).